Here is a 195-residue protein sequence, read N- to C-terminus: Sec-independent protein translocase protein TatB (195 aa).

The chain crosses the membrane as a helical span at residues 1 to 21 (MFDIGFSELALIAVVALVVLG). Residues 130 to 195 (EPGSAQPHTP…SSTSPQEKTP (66 aa)) form a disordered region. 2 stretches are compositionally biased toward low complexity: residues 145-157 (PVVAQAQPMAPAP) and 175-195 (TTHAPTASATASSTSPQEKTP).

This sequence belongs to the TatB family. In terms of assembly, the Tat system comprises two distinct complexes: a TatABC complex, containing multiple copies of TatA, TatB and TatC subunits, and a separate TatA complex, containing only TatA subunits. Substrates initially bind to the TatABC complex, which probably triggers association of the separate TatA complex to form the active translocon.

The protein resides in the cell inner membrane. Part of the twin-arginine translocation (Tat) system that transports large folded proteins containing a characteristic twin-arginine motif in their signal peptide across membranes. Together with TatC, TatB is part of a receptor directly interacting with Tat signal peptides. TatB may form an oligomeric binding site that transiently accommodates folded Tat precursor proteins before their translocation. The polypeptide is Sec-independent protein translocase protein TatB (Xanthomonas campestris pv. campestris (strain 8004)).